A 481-amino-acid polypeptide reads, in one-letter code: UDP-N-acetylmuramate--L-alanine ligase (481 aa).

Position 115-121 (115-121 (GTHGKTT)) interacts with ATP.

This sequence belongs to the MurCDEF family.

The protein localises to the cytoplasm. It catalyses the reaction UDP-N-acetyl-alpha-D-muramate + L-alanine + ATP = UDP-N-acetyl-alpha-D-muramoyl-L-alanine + ADP + phosphate + H(+). The protein operates within cell wall biogenesis; peptidoglycan biosynthesis. Cell wall formation. This Granulibacter bethesdensis (strain ATCC BAA-1260 / CGDNIH1) protein is UDP-N-acetylmuramate--L-alanine ligase.